The chain runs to 299 residues: Sugar transporter SWEET1 (299 aa).

The MtN3/slv 1 domain maps to 7 to 91 (QVLSISAITT…CVFFLIYSLP (85 aa)). A run of 7 helical transmembrane segments spans residues 8 to 28 (VLSI…IPIC), 36 to 56 (AVGD…SFWL), 67 to 87 (MIIV…FFLI), 95 to 115 (FTCQ…WIAL), 124 to 144 (VICM…LGVV), 155 to 175 (LPMC…GNLV), and 180 to 200 (IIIP…LFVV). One can recognise a MtN3/slv 2 domain in the interval 121-205 (YLGVICMTFN…ALFVVLPIRE (85 aa)). Residues 230–299 (RGDCIVSSPP…DPDLSSIQSP (70 aa)) form a disordered region. Over residues 247 to 261 (NETRSDVEDKFDKLM) the composition is skewed to basic and acidic residues. Residues 276 to 299 (SMGSPPSYKSRSSSDPDLSSIQSP) are compositionally biased toward low complexity.

It belongs to the SWEET sugar transporter family.

It localises to the golgi apparatus membrane. The protein resides in the cell membrane. Mediates both low-affinity uptake and efflux of sugar across the membrane. This is Sugar transporter SWEET1 (swt-1) from Caenorhabditis elegans.